The sequence spans 123 residues: Small ribosomal subunit protein uS12 (123 aa).

Residue Asp89 is modified to 3-methylthioaspartic acid.

It belongs to the universal ribosomal protein uS12 family. In terms of assembly, part of the 30S ribosomal subunit. Contacts proteins S8 and S17. May interact with IF1 in the 30S initiation complex.

Its function is as follows. With S4 and S5 plays an important role in translational accuracy. Interacts with and stabilizes bases of the 16S rRNA that are involved in tRNA selection in the A site and with the mRNA backbone. Located at the interface of the 30S and 50S subunits, it traverses the body of the 30S subunit contacting proteins on the other side and probably holding the rRNA structure together. The combined cluster of proteins S8, S12 and S17 appears to hold together the shoulder and platform of the 30S subunit. In Gluconobacter oxydans (strain 621H) (Gluconobacter suboxydans), this protein is Small ribosomal subunit protein uS12.